Here is a 5146-residue protein sequence, read N- to C-terminus: SCO-spondin (5146 aa).

An N-terminal signal peptide occupies residues 1 to 17; that stretch reads MLLPALLFGAAWALANG. The 77-residue stretch at 18–94 folds into the EMI domain; the sequence is RWCEQTETVL…ACCPGWGGTH (77 aa). Residues Asn-80, Asn-122, and Asn-153 are each glycosylated (N-linked (GlcNAc...) asparagine). Residues 185–356 form the VWFD 1 domain; the sequence is ATCATWSGFH…RLPDSELGCL (172 aa). Disulfide bonds link Cys-187-Cys-317, Cys-209-Cys-355, and Cys-231-Cys-237. A glycan (N-linked (GlcNAc...) asparagine) is linked at Asn-255. Residues 464–519 form the TIL 1 domain; sequence CPGGQLYSDCASACPPSCSAVGEGSEWSCGEECVSGCECPPGLFWDGALCVPAARC. A VWFD 2 domain is found at 557–730; the sequence is AECAVGGDGH…FQVAGGGTCS (174 aa). 2 cysteine pairs are disulfide-bonded: Cys-559-Cys-692 and Cys-583-Cys-729. Residue Asn-814 is glycosylated (N-linked (GlcNAc...) asparagine). The TIL 2 domain maps to 822 to 875; sequence CPGGQEYQECAPACDRNCGEPEDCGELDNCVAGCNCPLGLLWDPEGQCVPPNLC. Asn-906 is a glycosylation site (N-linked (GlcNAc...) asparagine). The 171-residue stretch at 1008-1178 folds into the VWFD 3 domain; the sequence is GRCRASGAPH…HSWRLGPLCP (171 aa). Disulfide bonds link Cys-1010–Cys-1142, Cys-1032–Cys-1177, and Cys-1053–Cys-1060. Residues 1271 to 1327 form the TIL 3 domain; sequence CERGQVYEACGPTCPATCHDHRPEPGWPCRAVACVEGCFCPEGTLLHGGVCLEPAAC. The N-linked (GlcNAc...) asparagine glycan is linked to Asn-1349. LDL-receptor class A domains are found at residues 1372 to 1409, 1412 to 1447, 1448 to 1484, 1488 to 1526, 1561 to 1597, and 1599 to 1638; these read GCAEGETPCRESGHCVPHGWLCDNQDDCGDGSDEEGCA, VCGEGQVSCCSGRCLPLVLLCDGQDDCGDGMDEQGC, PCPQDSLTCADGHCLPPARLCDGHPDCPDGADEESCL, DCAPGEVSCVDGTCLGAIQLCDGVWDCLDGGDEGPGHCP, PCGPLDFACGSGECAPRGWRCDGEEDCADGSDESGCD, and PCAPHHAPCARGSHCVAAEQLCDGVPHCPDGSDEDPGACE. 18 disulfides stabilise this stretch: Cys-1373–Cys-1386, Cys-1380–Cys-1399, Cys-1393–Cys-1408, Cys-1413–Cys-1425, Cys-1420–Cys-1438, Cys-1432–Cys-1447, Cys-1449–Cys-1461, Cys-1456–Cys-1474, Cys-1468–Cys-1483, Cys-1489–Cys-1501, Cys-1496–Cys-1514, Cys-1508–Cys-1525, Cys-1562–Cys-1574, Cys-1569–Cys-1587, Cys-1581–Cys-1596, Cys-1600–Cys-1613, Cys-1607–Cys-1626, and Cys-1620–Cys-1637. Asn-1647 is a glycosylation site (N-linked (GlcNAc...) asparagine). The LDL-receptor class A 7 domain maps to 1652–1690; sequence PCPEYSCPDGLCIGFQQVCDGQPDCELAGTAGPSPEEQG. 2 TSP type-1 domains span residues 1691–1745 and 1747–1805; these read CGAW…AACP and DGVW…DGCP. 3 cysteine pairs are disulfide-bonded: Cys-1703–Cys-1739, Cys-1707–Cys-1744, and Cys-1718–Cys-1729. N-linked (GlcNAc...) asparagine glycosylation occurs at Asn-1806. The TIL 4 domain occupies 1809-1865; it reads CSGELVFHACVPCPLTCDDISGQATCPPDRPCGGPGCWCPAGQVLGAQGRCVWPRQC. EGF-like domains follow at residues 1821-1860 and 1861-1898; these read CPLTCDDISGQATCPPDRPCGGPGCWCPAGQVLGAQGRCV and WPRQCPCLVDGSRYWPGQRVKTDCQLCVCQDGRPRRCQ. Residues 1906 to 1962 form the TSP type-1 3 domain; it reads NCGWSAWSPWAECLGPCGSRSVQWSFRSPNNPRPAGRGHQCRGLHRKARRCQTEPCE. 3 disulfides stabilise this stretch: Cys-1907–Cys-1946, Cys-1918–Cys-1922, and Cys-1956–Cys-1961. In terms of domain architecture, VWFC 1 spans 1962–2022; the sequence is EGCEQDGRVH…GVGESCCHCV (61 aa). Residues Asn-2027 and Asn-2127 are each glycosylated (N-linked (GlcNAc...) asparagine). 4 cysteine pairs are disulfide-bonded: Cys-2062/Cys-2220, Cys-2226/Cys-2238, Cys-2233/Cys-2251, and Cys-2245/Cys-2260. The region spanning 2062 to 2220 is the F5/8 type C domain; sequence CYSPLGLARL…GPLRVELLGC (159 aa). In terms of domain architecture, LDL-receptor class A 8 spans 2225–2261; that stretch reads LCLGVGHRCVSGECAPRGAPCDGVEDCKDGSDEEGCV. The segment at 2262–2346 is disordered; that stretch reads TPPAGAGRIE…TPTSQPEAQA (85 aa). 2 stretches are compositionally biased toward polar residues: residues 2273-2284 and 2331-2343; these read TAWSSAPSSAQP and GSVQTVTPTSQPE. 2 consecutive LDL-receptor class A domains span residues 2382–2418 and 2442–2478; these read QCSPGQVPCEVLGCVELEQLCDGREDCLDGSDERPCA and LCSPSQLTCGSGECLPVERRCDLQLDCQDGSDENGCV. 12 cysteine pairs are disulfide-bonded: Cys-2383-Cys-2395, Cys-2390-Cys-2408, Cys-2402-Cys-2417, Cys-2443-Cys-2455, Cys-2450-Cys-2468, Cys-2462-Cys-2477, Cys-2480-Cys-2516, Cys-2491-Cys-2495, Cys-2526-Cys-2531, Cys-2546-Cys-2583, Cys-2550-Cys-2588, and Cys-2561-Cys-2573. TSP type-1 domains lie at 2479–2532 and 2534–2589; these read DCGL…QACP and AGAW…QPCA. The 44-residue stretch at 2611-2654 folds into the TIL 5 domain; that stretch reads VPPCPPSCLDPEANRSCSGLCLEGCRCPPGLLLQDAGCLPLSEC. Asn-2624 and Asn-2673 each carry an N-linked (GlcNAc...) asparagine glycan. TSP type-1 domains follow at residues 2694–2748, 2751–2807, and 2809–2862; these read PCGW…SACG, VPGW…PVCL, and LGVW…QPCT. 9 cysteine pairs are disulfide-bonded: Cys-2695-Cys-2733, Cys-2706-Cys-2710, Cys-2743-Cys-2747, Cys-2763-Cys-2801, Cys-2767-Cys-2806, Cys-2783-Cys-2791, Cys-2821-Cys-2856, Cys-2825-Cys-2861, and Cys-2836-Cys-2846. N-linked (GlcNAc...) asparagine glycosylation is found at Asn-2915 and Asn-2946. 2 TSP type-1 domains span residues 2964 to 3019 and 3020 to 3071; these read ACGW…RPCG and GPAG…GVCP. Disulfide bonds link Cys-2965–Cys-3003, Cys-2976–Cys-2980, and Cys-3013–Cys-3018. Asn-3041 carries an N-linked (GlcNAc...) asparagine glycan. Positions 3070–3122 constitute a TIL 6 domain; sequence CPPGKRWLDCAQGPASCAELSAPRGADQPCHPGCYCPSGMLLLNNACVPTQDC. N-linked (GlcNAc...) asparagine glycans are attached at residues Asn-3143 and Asn-3153. TSP type-1 domains follow at residues 3163–3230 and 3232–3287; these read QPTW…PECD and AGGW…LPCP. 6 disulfide bridges follow: Cys-3175–Cys-3224, Cys-3179–Cys-3229, Cys-3190–Cys-3214, Cys-3244–Cys-3281, Cys-3248–Cys-3286, and Cys-3259–Cys-3271. Asn-3290 carries N-linked (GlcNAc...) asparagine glycosylation. Residues 3295–3345 form the TIL 7 domain; sequence EGAEYSACGPPCPRSCDDLVHCVWHCQPGCYCPPGQVLSADGTVHVQPGHC. 2 TSP type-1 domains span residues 3388 to 3450 and 3452 to 3507; these read PGAW…PECP and DGAW…TQCT. 6 disulfide bridges follow: Cys-3400–Cys-3443, Cys-3404–Cys-3449, Cys-3415–Cys-3427, Cys-3464–Cys-3499, Cys-3467–Cys-3506, and Cys-3477–Cys-3489. Asn-3502, Asn-3580, and Asn-3607 each carry an N-linked (GlcNAc...) asparagine glycan. Positions 3626 to 3674 constitute a TSP type-1 15 domain; that stretch reads LGLWGSWGPWEDCSVSCGGGEQLRFRRCPRPPCPGPARQSRTCRTQVCR. 3 cysteine pairs are disulfide-bonded: Cys-3638–Cys-3668, Cys-3642–Cys-3673, and Cys-3653–Cys-3658. An N-linked (GlcNAc...) asparagine glycan is attached at Asn-3783. 4 consecutive TSP type-1 domains span residues 3802–3858, 3872–3924, 3938–3994, and 3996–4051; these read AGGF…PECP, PGGW…PSCT, NCSW…RACP, and PGGW…TPCE. 3 disulfides stabilise this stretch: Cys-3814–Cys-3852, Cys-3818–Cys-3857, and Cys-3830–Cys-3842. Residues Asn-3906 and Asn-3938 are each glycosylated (N-linked (GlcNAc...) asparagine). 6 disulfide bridges follow: Cys-3939/Cys-3975, Cys-3950/Cys-3954, Cys-3988/Cys-3993, Cys-4008/Cys-4045, Cys-4012/Cys-4050, and Cys-4023/Cys-4035. Residues 4054 to 4109 form the TIL 8 domain; sequence CPAGMEVVSCANRCPRRCSDLQEGIVCQEDQACQQGCRCPEGSLEQDGGCVPLGHC. The VWFC 2 domain maps to 4101 to 4168; sequence GGCVPLGHCE…AWSPCSRSCG (68 aa). Residue Asn-4131 is glycosylated (N-linked (GlcNAc...) asparagine). 4 consecutive TSP type-1 domains span residues 4151–4204, 4245–4300, 4302–4358, and 4360–4414; these read HCAW…SPCP, LGAW…WPCP, LPDT…GPCL, and ECVW…GNCS. Disulfide bonds link Cys-4152/Cys-4188, Cys-4163/Cys-4167, Cys-4198/Cys-4203, Cys-4257/Cys-4294, Cys-4261/Cys-4299, and Cys-4272/Cys-4284. Asn-4341 is a glycosylation site (N-linked (GlcNAc...) asparagine). 3 disulfide bridges follow: Cys-4361–Cys-4398, Cys-4372–Cys-4374, and Cys-4408–Cys-4413. Asn-4412 carries N-linked (GlcNAc...) asparagine glycosylation. The TIL 9 domain maps to 4418 to 4473; it reads CAPPFEFQACGSPCTGLCATYLSPWLCQDLPPCQPGCYCPEGLLEQAGGCVPPEQC. Positions 4610 to 4661 constitute a TSP type-1 24 domain; sequence LCQWGPWGAWSPCQVPCSGGFRLRWREAGIPPGGGCRGPWAQTESCNMGPCP. 3 disulfides stabilise this stretch: Cys-4611–Cys-4645, Cys-4622–Cys-4626, and Cys-4655–Cys-4660. Positions 4675-4721 constitute a TIL 10 domain; it reads DCANQCPRSCVDLWDRVECLQGPCRPGCRCPPGQLVQDGHCVPVSSC. 4 N-linked (GlcNAc...) asparagine glycosylation sites follow: Asn-4729, Asn-4746, Asn-4751, and Asn-4772. Residues 4761–4814 enclose the TSP type-1 25 domain; the sequence is CPTLGPWSAWSNCSAPCGGGTTKRHRSCKEGPGVTPCQAQDMEQQQDCNLQPCP. Disulfide bonds link Cys-4773–Cys-4808, Cys-4777–Cys-4813, and Cys-4788–Cys-4797. The 55-residue stretch at 4816-4870 folds into the TIL 11 domain; sequence CPPGQVLSACAVSCPRLCSHLQPGTPCMQEPCQLGCDCPRGQLLHNGTCVPPAEC. N-linked (GlcNAc...) asparagine glycosylation is found at Asn-4861, Asn-4901, Asn-4947, and Asn-4954. The VWFC 3 domain maps to 4983–5041; sequence CECWHHGRPHPPGSEWQKACESCRCVSGESICTQHCPPLTCAQGETAVQEPGGCCPTCR. 4 disulfides stabilise this stretch: Cys-5052/Cys-5100, Cys-5066/Cys-5117, Cys-5076/Cys-5133, and Cys-5080/Cys-5135. The CTCK domain occupies 5052 to 5139; the sequence is CRHLTELRNL…IHSCQCSACQ (88 aa). Asn-5060 carries N-linked (GlcNAc...) asparagine glycosylation.

The protein belongs to the thrombospondin family. As to expression, subcommissural organ. Located at the boundary of the diencephalon and mesencephalon beneath the posterior commissure at the point where the axons cross the midline.

It localises to the secreted. Its subcellular location is the extracellular space. Functionally, involved in the modulation of neuronal aggregation. May be involved in developmental events during the formation of the central nervous system. The chain is SCO-spondin (SSPO) from Bos taurus (Bovine).